The primary structure comprises 430 residues: Maintenance of mitochondrial morphology protein 1 (430 aa).

The Lumenal segment spans residues 1–70 (MSQGLIETTT…NGNTWSFTQG (70 aa)). A helical membrane pass occupies residues 71–91 (LVIGQISVIFIIIVFVKFFVF). The Cytoplasmic portion of the chain corresponds to 92–430 (ADSSSHIPTK…TPGEFVNSNI (339 aa)). In terms of domain architecture, SMP-LTD spans 159 to 387 (ASESLDWFNV…EPRFQVVRLP (229 aa)). Positions 305 to 326 (GYSKENGSADSASDNDEDEDDG) are disordered. The segment covering 317–326 (SDNDEDEDDG) has biased composition (acidic residues).

This sequence belongs to the MMM1 family. In terms of assembly, homodimer. Component of the ER-mitochondria encounter structure (ERMES) or MDM complex, composed of MMM1, MDM10, MDM12 and MDM34. An MMM1 homodimer associates with one molecule of MDM12 on each side in a pairwise head-to-tail manner, and the SMP-LTD domains of MMM1 and MDM12 generate a continuous hydrophobic tunnel for phospholipid trafficking.

The protein resides in the endoplasmic reticulum membrane. Component of the ERMES/MDM complex, which serves as a molecular tether to connect the endoplasmic reticulum (ER) and mitochondria. Components of this complex are involved in the control of mitochondrial shape and protein biogenesis, and function in nonvesicular lipid trafficking between the ER and mitochondria. The MDM12-MMM1 subcomplex functions in the major beta-barrel assembly pathway that is responsible for biogenesis of all outer membrane beta-barrel proteins, and acts in a late step after the SAM complex. The MDM10-MDM12-MMM1 subcomplex further acts in the TOM40-specific pathway after the action of the MDM12-MMM1 complex. Essential for establishing and maintaining the structure of mitochondria and maintenance of mtDNA nucleoids. This Candida dubliniensis (strain CD36 / ATCC MYA-646 / CBS 7987 / NCPF 3949 / NRRL Y-17841) (Yeast) protein is Maintenance of mitochondrial morphology protein 1.